The sequence spans 255 residues: MRHPLVMGNWKLNGSRHMVNELVANLRKELTGVAGCDVAIAPPEMYIDLAKRAAAGSHIMLGAQNVDLNLSGAFTGETSAEMLKDIGAQYIIIGHSERRTYHKESDELIAKKFAVLKEQGLTPVLCIGETEAENEAGKTEEVCARQIDAVLKTQGAAAFEGAVIAYEPVWAIGTGKSATPAQAQAVHKFIRDHIAKADAKIAEQVIIQYGGSVNASNAAELFAQPDIDGALVGGASLKADAFAVIVKAAEAAKQA.

9 to 11 provides a ligand contact to substrate; sequence NWK. His95 acts as the Electrophile in catalysis. The active-site Proton acceptor is the Glu167. Substrate is bound by residues Gly173, Ser212, and 233-234; that span reads GG.

Belongs to the triosephosphate isomerase family. Homodimer.

The protein resides in the cytoplasm. It carries out the reaction D-glyceraldehyde 3-phosphate = dihydroxyacetone phosphate. The protein operates within carbohydrate biosynthesis; gluconeogenesis. It functions in the pathway carbohydrate degradation; glycolysis; D-glyceraldehyde 3-phosphate from glycerone phosphate: step 1/1. Functionally, involved in the gluconeogenesis. Catalyzes stereospecifically the conversion of dihydroxyacetone phosphate (DHAP) to D-glyceraldehyde-3-phosphate (G3P). In Salmonella agona (strain SL483), this protein is Triosephosphate isomerase.